The sequence spans 747 residues: Plakophilin-1 (747 aa).

Positions Met-1–Lys-234 are required for binding to single stranded DNA. A required for interaction with EIF4A1 region spans residues Met-1 to Leu-286. Ser-4 is subject to Phosphoserine. Residues Thr-48–Gly-68 are disordered. Phosphorylation in this region is required for cytoplasmic localization and protein stabilization regions lie at residues Ser-54 to Ser-69 and Arg-116 to Ser-191. Phosphoserine; by PKB/AKT2 is present on Ser-118. 3 positions are modified to phosphoserine: Ser-119, Ser-121, and Ser-142. The required for WNT-mediated nuclear localization stretch occupies residues Tyr-160–Ile-269. ARM repeat units lie at residues Ser-243–Phe-274, Gln-275–Phe-316, Arg-317–Ser-359, Thr-360–Gly-415, Met-416–Ala-463, Asn-525–Met-556, Gly-557–Leu-603, Leu-604–Gly-649, and Asn-650–Ser-713.

The protein belongs to the beta-catenin family. As to quaternary structure, part of a complex that contains DSG3, PKP1, YAP1 and YWHAG; the complex is required for localization of DSG3 and YAP1 to the cell membrane in keratinocytes. Interacts with DSP. Interacts (via N-terminus) with KRT5/CK5, KRT8/CK8 (via rod domain), KRT15/CK15 and KRT18/CK18 (via rod domain) as part of intermediate filaments. Interacts with VIM (via rod domain). Interacts with DSP. Interacts with DES. Interacts with FXR1; the interaction may facilitate the binding of PKP1 to PKP2, PKP3 and DSP mRNA. Interacts (via N-terminus) with EIF4A1; the interaction promotes EIF4A1 recruitment to the cap-dependent translation complex and EIF4A1 ATPase activity. Interacts with TJP1/ZO-1; the interaction facilitates TJP1/ZO-1 localization to the plasma membrane. Interacts (when phosphorylated) with YWHAG; the interaction results in translocation of PKP1 to the cytoplasm and loss of intercellular adhesion in keratinocytes. Post-translationally, phosphorylated by AKT2; required for interaction with YWHAG and subsequent localization away from desmosomes to the cytoplasm. Phosphorylation of Ser-118 by AKT2 promotes PKP1-driven cap-dependent mRNA translation and decreases intercellular adhesion, phosphorylation is promoted by insulin. Phosphorylation by RIPK4 at the N-terminus is required for its role in differentiation of keratinocytes and DSG1 localization at cell junctions. As to expression, expressed in stratified squamous, complex, glandular duct and bladder epithelia (at protein level). In terms of tissue distribution, widely expressed (at protein level).

It localises to the cell junction. The protein localises to the desmosome. Its subcellular location is the nucleus. The protein resides in the cytoplasm. It is found in the perinuclear region. It localises to the cell membrane. The protein localises to the stress granule. In terms of biological role, a component of desmosome cell-cell junctions which are required for positive regulation of cellular adhesion. Plays a role in desmosome protein expression regulation and localization to the desmosomal plaque, thereby maintaining cell sheet integrity and anchorage of desmosomes to intermediate filaments. Required for localization of DSG3 and YAP1 to the cell membrane in keratinocytes in response to mechanical strain, via the formation of an interaction complex composed of DSG3, YAP1, PKP1 and YWHAG. Positively regulates differentiation of keratinocytes, potentially via promoting localization of DSG1 at desmosome cell junctions. Required for calcium-independent development and maturation of desmosome plaques specifically at lateral cell-cell contacts in differentiating keratinocytes. Plays a role in the maintenance of DSG3 protein abundance, DSG3 clustering and localization of these clusters to the cell membrane in keratinocytes. May also promote keratinocyte proliferation and morphogenesis during postnatal development. Required for tight junction inside-out transepidermal barrier function of the skin. Promotes Wnt-mediated proliferation and differentiation of ameloblasts, via facilitating TJP1/ZO-1 localization to tight junctions. Binds single-stranded DNA (ssDNA), and may thereby play a role in sensing DNA damage and promoting cell survival. Positively regulates cap-dependent translation and as a result cell proliferation, via recruitment of EIF4A1 to the initiation complex and promotion of EIF4A1 ATPase activity. Regulates the mRNA stability and protein abundance of desmosome components PKP2, PKP3, DSC2 and DSP, potentially via its interaction with FXR1. This is Plakophilin-1 (PKP1) from Homo sapiens (Human).